A 426-amino-acid polypeptide reads, in one-letter code: Enolase (426 aa).

Position 41 (glycine 41) interacts with phosphoenolpyruvate. Serine 43 is a Mg(2+) binding site. Glutamate 165 contributes to the phosphoenolpyruvate binding site. Positions 165 and 206 each coordinate (2R)-2-phosphoglycerate. Catalysis depends on glutamate 206, which acts as the Proton donor. The Mg(2+) site is built by aspartate 243, glutamate 286, and aspartate 313. The phosphoenolpyruvate site is built by aspartate 313, lysine 338, arginine 367, serine 368, and lysine 389. (2R)-2-phosphoglycerate is bound by residues lysine 338, arginine 367, and serine 368. The active-site Proton acceptor is lysine 338.

The protein belongs to the enolase family. As to quaternary structure, homodimer. The cofactor is Mg(2+).

It localises to the cytoplasm. The protein resides in the secreted. Its subcellular location is the cell surface. The enzyme catalyses (2R)-2-phosphoglycerate = phosphoenolpyruvate + H2O. Its pathway is carbohydrate degradation; glycolysis; pyruvate from D-glyceraldehyde 3-phosphate: step 4/5. In terms of biological role, catalyzes the reversible conversion of 2-phosphoglycerate (2-PG) into phosphoenolpyruvate (PEP). It is essential for the degradation of carbohydrates via glycolysis. The sequence is that of Enolase from Chloroflexus aurantiacus (strain ATCC 29366 / DSM 635 / J-10-fl).